A 322-amino-acid chain; its full sequence is Ribosomal RNA small subunit methyltransferase H (322 aa).

Residues 40 to 42, Asp60, Phe84, Asp106, and Gln113 each bind S-adenosyl-L-methionine; that span reads GGH.

It belongs to the methyltransferase superfamily. RsmH family.

Its subcellular location is the cytoplasm. The catalysed reaction is cytidine(1402) in 16S rRNA + S-adenosyl-L-methionine = N(4)-methylcytidine(1402) in 16S rRNA + S-adenosyl-L-homocysteine + H(+). Its function is as follows. Specifically methylates the N4 position of cytidine in position 1402 (C1402) of 16S rRNA. This is Ribosomal RNA small subunit methyltransferase H from Mannheimia succiniciproducens (strain KCTC 0769BP / MBEL55E).